A 168-amino-acid polypeptide reads, in one-letter code: MTALDIQISVEAGDWPPEDELQSFCERVLEAAADFLAREENQPLPAQAAELSLVFTDDQSIRAINAEWRGQDKATNVLSFPAFPVTPGRMPGPMLGDIVVAHETLRREAAELEKPFDAHLTHLLVHGFLHLFGYDHIEDDEAERMEGLETRILARLGLSDPYGDQPPH.

The Zn(2+) site is built by His-126, His-130, and His-136.

The protein belongs to the endoribonuclease YbeY family. Zn(2+) serves as cofactor.

The protein localises to the cytoplasm. In terms of biological role, single strand-specific metallo-endoribonuclease involved in late-stage 70S ribosome quality control and in maturation of the 3' terminus of the 16S rRNA. The polypeptide is Endoribonuclease YbeY (Rhizobium meliloti (strain 1021) (Ensifer meliloti)).